We begin with the raw amino-acid sequence, 923 residues long: Meiotic recombination protein rec11 (923 aa).

The SCD domain occupies Leu278–Ile365.

The polypeptide is Meiotic recombination protein rec11 (rec11) (Schizosaccharomyces pombe (strain 972 / ATCC 24843) (Fission yeast)).